A 132-amino-acid chain; its full sequence is Ribosome-binding factor A (132 aa).

It belongs to the RbfA family. Monomer. Binds 30S ribosomal subunits, but not 50S ribosomal subunits or 70S ribosomes.

It is found in the cytoplasm. In terms of biological role, one of several proteins that assist in the late maturation steps of the functional core of the 30S ribosomal subunit. Associates with free 30S ribosomal subunits (but not with 30S subunits that are part of 70S ribosomes or polysomes). Required for efficient processing of 16S rRNA. May interact with the 5'-terminal helix region of 16S rRNA. The polypeptide is Ribosome-binding factor A (Burkholderia vietnamiensis (strain G4 / LMG 22486) (Burkholderia cepacia (strain R1808))).